A 229-amino-acid chain; its full sequence is Peptidase E (229 aa).

Catalysis depends on charge relay system residues Ser-120, Asp-135, and His-157.

It belongs to the peptidase S51 family.

It is found in the cytoplasm. The catalysed reaction is Dipeptidase E catalyzes the hydrolysis of dipeptides Asp-|-Xaa. It does not act on peptides with N-terminal Glu, Asn or Gln, nor does it cleave isoaspartyl peptides.. Its function is as follows. Hydrolyzes dipeptides containing N-terminal aspartate residues. May play a role in allowing the cell to use peptide aspartate to spare carbon otherwise required for the synthesis of the aspartate family of amino acids. The polypeptide is Peptidase E (Salmonella schwarzengrund (strain CVM19633)).